The chain runs to 647 residues: Threonine--tRNA ligase (647 aa).

The 61-residue stretch at M1–T61 folds into the TGS domain. Residues D242–P540 are catalytic. Residues C336, H387, and H517 each contribute to the Zn(2+) site.

This sequence belongs to the class-II aminoacyl-tRNA synthetase family. In terms of assembly, homodimer. Zn(2+) is required as a cofactor.

The protein resides in the cytoplasm. It carries out the reaction tRNA(Thr) + L-threonine + ATP = L-threonyl-tRNA(Thr) + AMP + diphosphate + H(+). In terms of biological role, catalyzes the attachment of threonine to tRNA(Thr) in a two-step reaction: L-threonine is first activated by ATP to form Thr-AMP and then transferred to the acceptor end of tRNA(Thr). Also edits incorrectly charged L-seryl-tRNA(Thr). The protein is Threonine--tRNA ligase of Streptococcus sanguinis (strain SK36).